Reading from the N-terminus, the 728-residue chain is Pre-mRNA-splicing ATP-dependent RNA helicase prp-28 (728 aa).

The tract at residues Lys-19–Tyr-155 is disordered. Composition is skewed to basic and acidic residues over residues Pro-33 to Lys-59, Arg-109 to Gln-125, and Glu-137 to Ala-153. A Q motif motif is present at residues Arg-293–Arg-321. The 204-residue stretch at Ile-324–Val-527 folds into the Helicase ATP-binding domain. Ala-337–Thr-344 serves as a coordination point for ATP. The DEAD box motif lies at Asp-450–Asp-453. Residues Thr-538–Glu-701 form the Helicase C-terminal domain. Residues Lys-692 to Asn-728 are disordered. Positions Val-693 to Ala-703 are enriched in basic and acidic residues.

This sequence belongs to the DEAD box helicase family. DDX23/PRP28 subfamily. As to quaternary structure, component of the U5 snRNP complex.

The protein localises to the cytoplasm. Its subcellular location is the nucleus. It carries out the reaction ATP + H2O = ADP + phosphate + H(+). Its function is as follows. ATP-dependent RNA helicase involved in mRNA splicing. May destabilize the U1/5'-splice site duplex to permit an effective competition for the 5'-splice site by the U6 snRNA, resulting in the switch between U1 and U6 at the 5'-splice site. May also act to unwind the U4/U6 base-pairing interaction in the U4/U6/U5 snRNP, facilitating the first covalent step of splicing. In Neurospora crassa (strain ATCC 24698 / 74-OR23-1A / CBS 708.71 / DSM 1257 / FGSC 987), this protein is Pre-mRNA-splicing ATP-dependent RNA helicase prp-28 (prp-28).